Consider the following 288-residue polypeptide: MSQISAKDVKDLRDKTGVGMMDCKKALEETGGDMQKAIEYLRKKGAALAAKRAGREASEGIIAIRISDDNTSGVIIELNCETDFVARGDDFTGFAAAIADLALENGIASAEAMMSLKLGEAYGNESVEDSIKTMTGRLGEKIDLKRLSLLQTSTGIIASYIHPGSQLGAIVELATDKPAESAELARDIAMQVAASSPIVVDRSVVPAENIEKEKEIFRQQALSQGKPEQFVEKIVTGRLEKYYQEVVLLEQPFIKDSNSRVQGVLEEFARKNGAAVSVTRFVRYQLGA.

An involved in Mg(2+) ion dislocation from EF-Tu region spans residues 82-85 (TDFV).

This sequence belongs to the EF-Ts family.

It is found in the cytoplasm. Associates with the EF-Tu.GDP complex and induces the exchange of GDP to GTP. It remains bound to the aminoacyl-tRNA.EF-Tu.GTP complex up to the GTP hydrolysis stage on the ribosome. The polypeptide is Elongation factor Ts (Prosthecochloris aestuarii (strain DSM 271 / SK 413)).